The following is a 111-amino-acid chain: Anti-adapter protein IraM (111 aa).

It belongs to the IraM/RssC family.

The protein localises to the cytoplasm. Its function is as follows. Involved in the stabilization of the sigma stress factor RpoS. The chain is Anti-adapter protein IraM from Cronobacter sakazakii (strain ATCC BAA-894) (Enterobacter sakazakii).